Here is a 163-residue protein sequence, read N- to C-terminus: Nucleotide-binding protein MAP_4063c (163 aa).

It belongs to the YajQ family.

Functionally, nucleotide-binding protein. In Mycolicibacterium paratuberculosis (strain ATCC BAA-968 / K-10) (Mycobacterium paratuberculosis), this protein is Nucleotide-binding protein MAP_4063c.